The chain runs to 215 residues: ATP-dependent Clp protease proteolytic subunit (215 aa).

S115 acts as the Nucleophile in catalysis. H140 is an active-site residue.

This sequence belongs to the peptidase S14 family. Fourteen ClpP subunits assemble into 2 heptameric rings which stack back to back to give a disk-like structure with a central cavity, resembling the structure of eukaryotic proteasomes.

It localises to the cytoplasm. The catalysed reaction is Hydrolysis of proteins to small peptides in the presence of ATP and magnesium. alpha-casein is the usual test substrate. In the absence of ATP, only oligopeptides shorter than five residues are hydrolyzed (such as succinyl-Leu-Tyr-|-NHMec, and Leu-Tyr-Leu-|-Tyr-Trp, in which cleavage of the -Tyr-|-Leu- and -Tyr-|-Trp bonds also occurs).. Cleaves peptides in various proteins in a process that requires ATP hydrolysis. Has a chymotrypsin-like activity. Plays a major role in the degradation of misfolded proteins. This is ATP-dependent Clp protease proteolytic subunit from Anaplasma marginale (strain Florida).